Reading from the N-terminus, the 362-residue chain is MKFGNFLLTYQPPQFSQTEVMKWLVKLGRISEECGFDTVWLLEHHFTEFGLLGNPYVAAAYLLGATKKLNVGTAAIVLPTAHPVRQLEEVNLLDQMSKGRFRFGICRGLYNKDFRVFGTDMNNSRALMECWYKLIRNGMTEGYMEADNEHIKFHKVKVLPTAYSQGGAPIYVVAESASTTEWAAQHGLPMILSWIINTNDKKAQIELYNEVAQEYGHDIHNIDHCLSYITSVDHDSMKAKEICRNFLGHWYDSYVNATTIFDDSDKTKGYDFNKGQWRDFVLKGHKNTNRRVDYSYEINPVGTPQECIDIIQTDIDATGISNICCGFEANGTVDEIISSMKLFQSDVMPFLKEKQQFSYYIS.

Belongs to the bacterial luciferase oxidoreductase family. As to quaternary structure, heterodimer of an alpha and a beta chain.

The catalysed reaction is a long-chain fatty aldehyde + FMNH2 + O2 = a long-chain fatty acid + hnu + FMN + H2O + 2 H(+). Light-emitting reaction in luminous bacteria. In Photorhabdus luminescens (Xenorhabdus luminescens), this protein is Alkanal monooxygenase alpha chain (luxA).